The chain runs to 414 residues: tRNA (guanine-N(7)-)-methyltransferase non-catalytic subunit WDR4 (414 aa).

Ala2 is modified (N-acetylalanine). 4 WD repeats span residues 60–99 (QGSD…CLSV), 101–140 (TVVR…GGGR), 144–184 (GHLS…IESF), and 187–227 (GHTE…ELHC). The tract at residues 377-414 (EERLQQQLEKKRRQAPPPGPNGPTKKMRAGELAQGCSS) is disordered.

This sequence belongs to the WD repeat TRM82 family. As to quaternary structure, non-catalytic component of the METTL1-WDR4 complex, composed of METTL1 and WDR4. Interacts with FEN1; the interaction is direct.

It localises to the nucleus. Its subcellular location is the chromosome. Its pathway is tRNA modification; N(7)-methylguanine-tRNA biosynthesis. In terms of biological role, non-catalytic component of the METTL1-WDR4 methyltransferase complex required for the formation of N(7)-methylguanine in a subset of RNA species, such as tRNAs, mRNAs and microRNAs (miRNAs). In the METTL1-WDR4 methyltransferase complex, WDR4 acts as a scaffold for tRNA-binding. Required for the formation of N(7)-methylguanine at position 46 (m7G46) in a large subset of tRNAs that contain the 5'-RAGGU-3' motif within the variable loop. M7G46 interacts with C13-G22 in the D-loop to stabilize tRNA tertiary structure and protect tRNAs from decay. Also required for the formation of N(7)-methylguanine at internal sites in a subset of mRNAs. Also required for methylation of a specific subset of miRNAs, such as let-7. Independently of METTL1, also plays a role in genome stability: localizes at the DNA replication site and regulates endonucleolytic activities of FEN1. This is tRNA (guanine-N(7)-)-methyltransferase non-catalytic subunit WDR4 from Bos taurus (Bovine).